The chain runs to 274 residues: UPF0758 protein RHE_CH01848 (274 aa).

A disordered region spans residues 1–37 (MAKGPVATSSDDELPFETEEPVADERSFFGGRPQKPA). Over residues 10 to 22 (SDDELPFETEEPV) the composition is skewed to acidic residues. In terms of domain architecture, MPN spans 152–274 (VLSSWSSVIQ…HVSLKGLKLI (123 aa)). Zn(2+)-binding residues include H223, H225, and D236. Residues 223–236 (HNHPSGDPTPSRAD) carry the JAMM motif motif.

The protein belongs to the UPF0758 family.

This chain is UPF0758 protein RHE_CH01848, found in Rhizobium etli (strain ATCC 51251 / DSM 11541 / JCM 21823 / NBRC 15573 / CFN 42).